The following is a 69-amino-acid chain: UPF0337 protein YjbJ (69 aa).

It belongs to the UPF0337 (CsbD) family.

In Escherichia coli O6:H1 (strain CFT073 / ATCC 700928 / UPEC), this protein is UPF0337 protein YjbJ (yjbJ).